The primary structure comprises 1502 residues: Leucine-rich repeat-containing protein 9 (1502 aa).

29 LRR repeats span residues 53–79 (FPNL…HFLK), 97–119 (CADL…LENL), 120–141 (LKLE…LDMM), 142–164 (QNLK…LDPN), 166–188 (QLER…NLAR), 224–247 (LQRL…TVVK), 296–320 (EHEL…KFHE), 699–721 (YSQI…ISRL), 722–744 (NGLR…SYLT), 746–764 (LEYL…GFKG), 765–790 (LGKL…ILRK), 792–814 (AIQL…VLKD), 822–849 (LTHL…RITQ), 894–916 (YTKI…LEKL), 917–938 (VNLR…LEHC), 939–960 (VNLE…LSKL), 961–983 (TKLR…VIES), 985–1009 (SHLH…GYKL), 1011–1030 (ELYL…SLKG), 1031–1053 (LNNL…NYRL), 1100–1123 (FTEL…PADH), 1124–1146 (FRNV…LIFL), 1147–1170 (PNIK…KSQS), 1209–1232 (MQSL…QLGR), 1234–1255 (RNLK…LENL), 1256–1278 (QFLR…SFAK), 1280–1301 (NSLV…LPPL), 1302–1325 (LKLR…KLEV), and 1327–1351 (PALV…LLVV). Positions 317–342 (KFHENNCDTEESNSQQSSERRKNNSD) are disordered. A compositionally biased stretch (polar residues) spans 1479-1496 (TQQSGQARSQQKHPFNQE). Positions 1479–1502 (TQQSGQARSQQKHPFNQENEGRCV) are disordered.

This Xenopus tropicalis (Western clawed frog) protein is Leucine-rich repeat-containing protein 9 (lrrc9).